We begin with the raw amino-acid sequence, 294 residues long: Acetylglutamate kinase (294 aa).

Substrate contacts are provided by residues 63 to 64, arginine 85, and asparagine 188; that span reads GG.

Belongs to the acetylglutamate kinase family. ArgB subfamily.

The protein localises to the cytoplasm. It catalyses the reaction N-acetyl-L-glutamate + ATP = N-acetyl-L-glutamyl 5-phosphate + ADP. It functions in the pathway amino-acid biosynthesis; L-arginine biosynthesis; N(2)-acetyl-L-ornithine from L-glutamate: step 2/4. Its function is as follows. Catalyzes the ATP-dependent phosphorylation of N-acetyl-L-glutamate. In Methanococcus maripaludis (strain C6 / ATCC BAA-1332), this protein is Acetylglutamate kinase.